Reading from the N-terminus, the 370-residue chain is Phosphoribosylformylglycinamidine cyclo-ligase (370 aa).

Belongs to the AIR synthase family.

The protein localises to the cytoplasm. The enzyme catalyses 2-formamido-N(1)-(5-O-phospho-beta-D-ribosyl)acetamidine + ATP = 5-amino-1-(5-phospho-beta-D-ribosyl)imidazole + ADP + phosphate + H(+). Its pathway is purine metabolism; IMP biosynthesis via de novo pathway; 5-amino-1-(5-phospho-D-ribosyl)imidazole from N(2)-formyl-N(1)-(5-phospho-D-ribosyl)glycinamide: step 2/2. This chain is Phosphoribosylformylglycinamidine cyclo-ligase, found in Rhodospirillum rubrum (strain ATCC 11170 / ATH 1.1.1 / DSM 467 / LMG 4362 / NCIMB 8255 / S1).